Consider the following 190-residue polypeptide: MKLVHMASGLAVAIALAACADKSADIQTPAPAANTSISATQQPAIQQPNVSGTVWIRQKVALPPDAVLTVTLSDASLADAPSKVLAQKAVRTEGKQSPFSFVLSFNPADVQPNARILLSAAITVNDKLVFITDTVQPVINQGGTKADLTLVPVQQTAVPVQASGGATTTVPSTSPTQVNPSSAVPAPTQY.

The first 18 residues, 1-18 (MKLVHMASGLAVAIALAA), serve as a signal peptide directing secretion. Cysteine 19 is lipidated: N-palmitoyl cysteine. Cysteine 19 is lipidated: S-diacylglycerol cysteine. A compositionally biased stretch (low complexity) spans 162–182 (ASGGATTTVPSTSPTQVNPSS). The tract at residues 162-190 (ASGGATTTVPSTSPTQVNPSSAVPAPTQY) is disordered.

It localises to the cell membrane. This is an uncharacterized protein from Escherichia coli (strain K12).